A 203-amino-acid polypeptide reads, in one-letter code: Glycerol-3-phosphate acyltransferase (203 aa).

4 consecutive transmembrane segments (helical) span residues 7–27 (TLLMILAAYLAGSISSAVLVC), 82–102 (AVSLGLIAIAACLGHIYPVFF), 118–138 (APIGDDLAICLMASWVVLLLI), and 141–161 (YSSLAAILTALLAPLYTWWLD).

The protein belongs to the PlsY family. Probably interacts with PlsX.

It is found in the cell inner membrane. The catalysed reaction is an acyl phosphate + sn-glycerol 3-phosphate = a 1-acyl-sn-glycero-3-phosphate + phosphate. The protein operates within lipid metabolism; phospholipid metabolism. Its function is as follows. Catalyzes the transfer of an acyl group from acyl-phosphate (acyl-PO(4)) to glycerol-3-phosphate (G3P) to form lysophosphatidic acid (LPA). This enzyme utilizes acyl-phosphate as fatty acyl donor, but not acyl-CoA or acyl-ACP. This Shewanella baltica (strain OS223) protein is Glycerol-3-phosphate acyltransferase.